The primary structure comprises 298 residues: GTPase Era (298 aa).

In terms of domain architecture, Era-type G spans 4–171 (KSGFVSVIGR…LKEALDYIPE (168 aa)). The interval 12–19 (GRPNVGKS) is G1. GTP is bound at residue 12 to 19 (GRPNVGKS). The tract at residues 38 to 42 (QTTRN) is G2. Positions 59–62 (DTPG) are G3. GTP-binding positions include 59-63 (DTPGI) and 121-124 (NKVD). Residues 121–124 (NKVD) are G4. The tract at residues 150 to 152 (ISA) is G5. The region spanning 202-279 (LDDEVPHGVG…FLELWVKVKP (78 aa)) is the KH type-2 domain.

Belongs to the TRAFAC class TrmE-Era-EngA-EngB-Septin-like GTPase superfamily. Era GTPase family. As to quaternary structure, monomer.

The protein resides in the cytoplasm. It is found in the cell membrane. Functionally, an essential GTPase that binds both GDP and GTP, with rapid nucleotide exchange. Plays a role in 16S rRNA processing and 30S ribosomal subunit biogenesis and possibly also in cell cycle regulation and energy metabolism. This is GTPase Era from Ruminiclostridium cellulolyticum (strain ATCC 35319 / DSM 5812 / JCM 6584 / H10) (Clostridium cellulolyticum).